A 338-amino-acid chain; its full sequence is Sesquiterpene synthase 2 (338 aa).

Residues Asp-93, Asn-228, Ser-232, and Glu-236 each coordinate Mg(2+). The DDXXD motif motif lies at Asp-93–Asp-97. The short motif at Asn-228–Glu-236 is the NSE/DTE motif element. (2E,6E)-farnesyl diphosphate-binding residues include Arg-316 and Tyr-317.

Belongs to the terpene synthase family. Mg(2+) serves as cofactor.

The enzyme catalyses (2E,6E)-farnesyl diphosphate = alpha-copaene + diphosphate. It catalyses the reaction (2E,6E)-farnesyl diphosphate = beta-copaene + diphosphate. It carries out the reaction (2E,6E)-farnesyl diphosphate = alpha-muurolene + diphosphate. The catalysed reaction is (2E,6E)-farnesyl diphosphate = gamma-muurolene + diphosphate. The enzyme catalyses (2E,6E)-farnesyl diphosphate = delta-cadinene + diphosphate. Terpene cyclase that catalyzes the cyclization of farnesyl diphosphate (FPP) to various sesquiterpenes, including alpha-copaene, beta-copaene, beta-elemene, alpha-muurolene, gamma-muurolene and delta-cadinene. This chain is Sesquiterpene synthase 2, found in Postia placenta (strain ATCC 44394 / Madison 698-R) (Brown rot fungus).